Consider the following 463-residue polypeptide: Phosphomannomutase/phosphoglucomutase (463 aa).

Tyrosine 17 provides a ligand contact to alpha-D-glucose 1-phosphate. Tyrosine 17 contributes to the alpha-D-mannose 1-phosphate binding site. Serine 108 (non-phosphorylated intermediate) is an active-site residue. 4 residues coordinate Mg(2+): serine 108, aspartate 242, aspartate 244, and aspartate 246. Residue serine 108 is modified to Phosphoserine. Residues lysine 285, histidine 308, 325–329 (EMSGH), and 421–425 (RASNT) contribute to the alpha-D-glucose 1-phosphate site. Residues histidine 308, 325–329 (EMSGH), and 421–425 (RASNT) contribute to the alpha-D-mannose 1-phosphate site.

The protein belongs to the phosphohexose mutase family. As to quaternary structure, monomer. The cofactor is Mg(2+).

It catalyses the reaction alpha-D-mannose 1-phosphate = D-mannose 6-phosphate. It carries out the reaction alpha-D-glucose 1-phosphate = alpha-D-glucose 6-phosphate. It participates in nucleotide-sugar biosynthesis; GDP-alpha-D-mannose biosynthesis; alpha-D-mannose 1-phosphate from D-fructose 6-phosphate: step 2/2. Its pathway is bacterial outer membrane biogenesis; lipopolysaccharide biosynthesis. In terms of biological role, highly reversible phosphoryltransferase. The phosphomannomutase activity produces a precursor for alginate polymerization, the alginate layer causes a mucoid phenotype and provides a protective barrier against host immune defenses and antibiotics. Also involved in core lipopolysaccaride (LPS) biosynthesis due to its phosphoglucomutase activity. Essential for rhamnolipid production, an exoproduct correlated with pathogenicity. Required for biofilm production. The reaction proceeds via 2 processive phosphoryl transferase reactions; first from enzyme-phospho-Ser-108 to the substrate (generating a bisphosphorylated substrate intermediate and a dephosphorylated enzyme), a 180 degree rotation of the intermediate (probably aided by movement of domain 4), and subsequent transfer of phosphate back to the enzyme. The sequence is that of Phosphomannomutase/phosphoglucomutase (algC) from Pseudomonas aeruginosa (strain UCBPP-PA14).